Reading from the N-terminus, the 134-residue chain is Acyl carrier protein, chloroplastic (134 aa).

A chloroplast-targeting transit peptide spans 1–51 (MATTFSASVSMQATSLATTTRISFQKPVLVSNHGRTNLSFNLSRTRLSISC). In terms of domain architecture, Carrier spans 55 to 130 (QETVEKVSEI…QAAELIEELM (76 aa)). S90 is subject to O-(pantetheine 4'-phosphoryl)serine.

This sequence belongs to the acyl carrier protein (ACP) family. Post-translationally, 4'-phosphopantetheine is transferred from CoA to a specific serine of apo-ACP by acpS. This modification is essential for activity because fatty acids are bound in thioester linkage to the sulfhydryl of the prosthetic group. As to expression, seed.

It is found in the plastid. Its subcellular location is the chloroplast. It functions in the pathway lipid metabolism; fatty acid biosynthesis. Its function is as follows. Carrier of the growing fatty acid chain in fatty acid biosynthesis. This is Acyl carrier protein, chloroplastic (ACL1.C1) from Brassica napus (Rape).